An 808-amino-acid polypeptide reads, in one-letter code: Na(+)/H(+) antiporter 2 (808 aa).

The next 9 membrane-spanning stretches (helical) occupy residues 12–32 (HVAYSCVGIFSSIFSLVSLFV), 36–56 (LYIGESMVASIFGLIVGPHCL), 70–90 (ITLEISRILLCLQVFAVSVEL), 105–125 (LLVPVMTSGWLVIALFVWILV), 128–148 (LNFPASLLMGACITATDPVLA), 174–194 (CNDGLAIPFVFLSLDLLLYPG), 203–223 (WICVTILWECIFGSILGCIIG), 244–264 (FLAFYLILALTCAGFGSMLGV), and 267–287 (LLVSFFAGTAFAWDGWFAAKT). N291 is a glycosylation site (N-linked (GlcNAc...) asparagine). The next 5 membrane-spanning stretches (helical) occupy residues 294–314 (NVIDVLLNYAYFVYLGSILPW), 319–339 (NPDIGLDVWRLILLSLVVIFL), 361–381 (AMFIGHFGPIGVGAVFAAITS), 409–429 (VMACIWPITCFSIMTSVIVHG), and 432–452 (VAVIMLGRYLSTVTLMALPTG). Disordered stretches follow at residues 478 to 499 (QRLDKEPSLSPGQIGGRTSGMV) and 541 to 562 (HASTNDSHGTTTANLGTSNGRA). Polar residues predominate over residues 542–561 (ASTNDSHGTTTANLGTSNGR). 2 N-linked (GlcNAc...) asparagine glycosylation sites follow: N545 and N602. Residues 774 to 808 (LHSEDEMADDEAESENDMDYEDSDGPASRFKDHAD) are disordered. Over residues 779-797 (EMADDEAESENDMDYEDSD) the composition is skewed to acidic residues.

This sequence belongs to the fungal Na(+)/H(+) exchanger family.

Its subcellular location is the membrane. Functionally, sodium export from cell, takes up external protons in exchange for internal sodium ions. Seems to be poorly expressed. The polypeptide is Na(+)/H(+) antiporter 2 (SOD22) (Zygosaccharomyces rouxii).